We begin with the raw amino-acid sequence, 208 residues long: Large ribosomal subunit protein bL25 (208 aa).

Residues 184-208 (VTISGTSSDQDTSGGESSGTTTSED) are disordered. Positions 187 to 208 (SGTSSDQDTSGGESSGTTTSED) are enriched in low complexity.

This sequence belongs to the bacterial ribosomal protein bL25 family. CTC subfamily. As to quaternary structure, part of the 50S ribosomal subunit; part of the 5S rRNA/L5/L18/L25 subcomplex. Contacts the 5S rRNA. Binds to the 5S rRNA independently of L5 and L18.

This is one of the proteins that binds to the 5S RNA in the ribosome where it forms part of the central protuberance. This is Large ribosomal subunit protein bL25 from Ehrlichia ruminantium (strain Gardel).